The sequence spans 275 residues: NH(3)-dependent NAD(+) synthetase (275 aa).

47–54 (GISGGQDS) is an ATP binding site. Asp53 contacts Mg(2+). Arg141 is a binding site for deamido-NAD(+). An ATP-binding site is contributed by Thr161. Glu166 is a Mg(2+) binding site. Positions 174 and 181 each coordinate deamido-NAD(+). ATP-binding residues include Lys190 and Thr212. 261-262 (HK) is a binding site for deamido-NAD(+).

Belongs to the NAD synthetase family. In terms of assembly, homodimer.

It carries out the reaction deamido-NAD(+) + NH4(+) + ATP = AMP + diphosphate + NAD(+) + H(+). The protein operates within cofactor biosynthesis; NAD(+) biosynthesis; NAD(+) from deamido-NAD(+) (ammonia route): step 1/1. Functionally, catalyzes the ATP-dependent amidation of deamido-NAD to form NAD. Uses ammonia as a nitrogen source. The chain is NH(3)-dependent NAD(+) synthetase from Enterococcus faecalis (strain ATCC 700802 / V583).